Here is a 1001-residue protein sequence, read N- to C-terminus: DNA topoisomerase 3-alpha (1001 aa).

The region spanning 35 to 179 is the Toprim domain; the sequence is KVLCVAEKND…NLQVLRARFS (145 aa). The 421-residue stretch at 197–617 folds into the Topo IA-type catalytic domain; the sequence is DQRVSDAVDV…QQVQKYKQVF (421 aa). The active-site O-(5'-phospho-DNA)-tyrosine intermediate is the Y362. Residues 400 to 424 are disordered; the sequence is GGPTPRNGNKSDQAHPPIHPTKYTN. The C4-type zinc finger occupies 658-685; that stretch reads CPQCNKDMVLKTKKNGGFYLSCMGFPEC. The segment covering 774–792 has biased composition (polar residues); that stretch reads RMDNSQHPQPADSRQTGSS. Positions 774 to 810 are disordered; that stretch reads RMDNSQHPQPADSRQTGSSKALAQTLPPPTAAGESNS. Residues C813, C815, C838, C843, C897, C899, C922, and C930 each coordinate Zn(2+). 2 GRF-type zinc fingers span residues 813 to 852 and 897 to 939; these read CNCGQEAVLLTVRKEGPNRGRQFFKCNGGSCNFFLWADSP and CLCS…VDEN. A disordered region spans residues 937–1001; sequence DENTAPGTSG…HTRPFCPQNR (65 aa). Residues 953–964 show a composition bias toward basic and acidic residues; sequence DRGRTLESEARS.

Belongs to the type IA topoisomerase family. Binds ssDNA. Interacts (via N-terminal region) with BLM; the interaction is direct. Directly interacts with RMI1. Component of the RMI complex, containing at least TOP3A, RMI1 and RMI2. The RMI complex interacts with BLM. Mg(2+) serves as cofactor. In terms of tissue distribution, high expression is found in testis, heart, skeletal muscle and pancreas.

It localises to the mitochondrion matrix. It carries out the reaction ATP-independent breakage of single-stranded DNA, followed by passage and rejoining.. Its function is as follows. Releases the supercoiling and torsional tension of DNA introduced during the DNA replication and transcription by transiently cleaving and rejoining one strand of the DNA duplex. Introduces a single-strand break via transesterification at a target site in duplex DNA. The scissile phosphodiester is attacked by the catalytic tyrosine of the enzyme, resulting in the formation of a DNA-(5'-phosphotyrosyl)-enzyme intermediate and the expulsion of a 3'-OH DNA strand. The free DNA strand then undergoes passage around the unbroken strand thus removing DNA supercoils. Finally, in the religation step, the DNA 3'-OH attacks the covalent intermediate to expel the active-site tyrosine and restore the DNA phosphodiester backbone. As an essential component of the RMI complex it is involved in chromosome separation and the processing of homologous recombination intermediates to limit DNA crossover formation in cells. Has DNA decatenation activity. It is required for mtDNA decatenation and segregation after completion of replication, in a process that does not require BLM, RMI1 and RMI2. This Homo sapiens (Human) protein is DNA topoisomerase 3-alpha (TOP3A).